The chain runs to 266 residues: Hemin import ATP-binding protein HmuV (266 aa).

The 241-residue stretch at 2–242 folds into the ABC transporter domain; that stretch reads IEAVDICVQR…QNLRDVYSCS (241 aa). Residue 34–41 participates in ATP binding; sequence GPNGSGKS.

Belongs to the ABC transporter superfamily. Heme (hemin) importer (TC 3.A.1.14.5) family. In terms of assembly, the complex is composed of two ATP-binding proteins (HmuV), two transmembrane proteins (HmuU) and a solute-binding protein (HmuT).

It is found in the cell inner membrane. In terms of biological role, part of the ABC transporter complex HmuTUV involved in hemin import. Responsible for energy coupling to the transport system. In Bartonella henselae (strain ATCC 49882 / DSM 28221 / CCUG 30454 / Houston 1) (Rochalimaea henselae), this protein is Hemin import ATP-binding protein HmuV.